Reading from the N-terminus, the 207-residue chain is dTTP/UTP pyrophosphatase (207 aa).

Catalysis depends on aspartate 68, which acts as the Proton acceptor.

This sequence belongs to the Maf family. YhdE subfamily. It depends on a divalent metal cation as a cofactor.

Its subcellular location is the cytoplasm. It catalyses the reaction dTTP + H2O = dTMP + diphosphate + H(+). It carries out the reaction UTP + H2O = UMP + diphosphate + H(+). Nucleoside triphosphate pyrophosphatase that hydrolyzes dTTP and UTP. May have a dual role in cell division arrest and in preventing the incorporation of modified nucleotides into cellular nucleic acids. This chain is dTTP/UTP pyrophosphatase, found in Staphylothermus marinus (strain ATCC 43588 / DSM 3639 / JCM 9404 / F1).